A 539-amino-acid chain; its full sequence is O-phosphoserine--tRNA(Cys) ligase (539 aa).

Substrate-binding positions include 188–190 (HMT), 233–235 (SAS), 275–276 (YY), and N327.

It belongs to the class-II aminoacyl-tRNA synthetase family. O-phosphoseryl-tRNA(Cys) synthetase subfamily. In terms of assembly, homotetramer. Interacts with SepCysS.

The enzyme catalyses tRNA(Cys) + O-phospho-L-serine + ATP = O-phospho-L-seryl-tRNA(Cys) + AMP + diphosphate. Catalyzes the attachment of O-phosphoserine (Sep) to tRNA(Cys). The chain is O-phosphoserine--tRNA(Cys) ligase from Methanococcoides burtonii (strain DSM 6242 / NBRC 107633 / OCM 468 / ACE-M).